Reading from the N-terminus, the 257-residue chain is 5'-nucleotidase SurE (257 aa).

A divalent metal cation is bound by residues aspartate 9, aspartate 10, serine 40, and asparagine 93.

It belongs to the SurE nucleotidase family. A divalent metal cation serves as cofactor.

It is found in the cytoplasm. The enzyme catalyses a ribonucleoside 5'-phosphate + H2O = a ribonucleoside + phosphate. In terms of biological role, nucleotidase that shows phosphatase activity on nucleoside 5'-monophosphates. The chain is 5'-nucleotidase SurE from Campylobacter hominis (strain ATCC BAA-381 / DSM 21671 / CCUG 45161 / LMG 19568 / NCTC 13146 / CH001A).